A 510-amino-acid polypeptide reads, in one-letter code: Histidine ammonia-lyase (510 aa).

The segment at residues 143–145 (ASG) is a cross-link (5-imidazolinone (Ala-Gly)). S144 bears the 2,3-didehydroalanine (Ser) mark.

Belongs to the PAL/histidase family. Contains an active site 4-methylidene-imidazol-5-one (MIO), which is formed autocatalytically by cyclization and dehydration of residues Ala-Ser-Gly.

It is found in the cytoplasm. It carries out the reaction L-histidine = trans-urocanate + NH4(+). It participates in amino-acid degradation; L-histidine degradation into L-glutamate; N-formimidoyl-L-glutamate from L-histidine: step 1/3. The chain is Histidine ammonia-lyase from Pseudomonas putida (strain ATCC 47054 / DSM 6125 / CFBP 8728 / NCIMB 11950 / KT2440).